We begin with the raw amino-acid sequence, 1045 residues long: Bifunctional glutamine synthetase adenylyltransferase/adenylyl-removing enzyme (1045 aa).

Positions 1–527 (MSGPLRSERK…LHSQLFYRPL (527 aa)) are adenylyl removase. Residues 533-1045 (NLSADAIRLS…GVDSMEQREF (513 aa)) form an adenylyl transferase region.

This sequence belongs to the GlnE family. Requires Mg(2+) as cofactor.

The enzyme catalyses [glutamine synthetase]-O(4)-(5'-adenylyl)-L-tyrosine + phosphate = [glutamine synthetase]-L-tyrosine + ADP. The catalysed reaction is [glutamine synthetase]-L-tyrosine + ATP = [glutamine synthetase]-O(4)-(5'-adenylyl)-L-tyrosine + diphosphate. Functionally, involved in the regulation of glutamine synthetase GlnA, a key enzyme in the process to assimilate ammonia. When cellular nitrogen levels are high, the C-terminal adenylyl transferase (AT) inactivates GlnA by covalent transfer of an adenylyl group from ATP to specific tyrosine residue of GlnA, thus reducing its activity. Conversely, when nitrogen levels are low, the N-terminal adenylyl removase (AR) activates GlnA by removing the adenylyl group by phosphorolysis, increasing its activity. The regulatory region of GlnE binds the signal transduction protein PII (GlnB) which indicates the nitrogen status of the cell. The chain is Bifunctional glutamine synthetase adenylyltransferase/adenylyl-removing enzyme from Corynebacterium glutamicum (strain ATCC 13032 / DSM 20300 / JCM 1318 / BCRC 11384 / CCUG 27702 / LMG 3730 / NBRC 12168 / NCIMB 10025 / NRRL B-2784 / 534).